Here is a 105-residue protein sequence, read N- to C-terminus: Fungal protease inhibitor-1 (105 aa).

The N-terminal stretch at 1-19 (MKAVITLLFLACILVVTYG) is a signal peptide. 6 disulfide bridges follow: Cys23–Cys56, Cys28–Cys58, Cys33–Cys59, Cys42–Cys62, Cys72–Cys93, and Cys87–Cys98.

In terms of biological role, inhibits proteases from the fungi A.oryzae and R.oryzae, trypsin and chymotrypsin. Does not inhibit protease from the bacterium B.licheniformis or papain. The protein is Fungal protease inhibitor-1 of Antheraea mylitta (Tasar silkworm).